The chain runs to 162 residues: MAQRPSVPIAIIGNYISRRRQVSLEEAEALAQGLKCRFLGEVHAIRDGPYSYADGTLESILNLYRDAFFGDFDSETGEHRKEKEFKGEVLSSGLKDIAKQKRHKLANIFMNPKPPKYRSSTSLGGIATGCSPRSVVGVGGGNRCAHRPVCCTDNKFSECLPL.

Cystine bridges form between Cys36-Cys150 and Cys151-Cys159.

Belongs to the fungal hydrophobin family. Self-assembles to form functional amyloid fibrils called rodlets. Self-assembly into fibrillar rodlets occurs spontaneously at hydrophobic:hydrophilic interfaces and the rodlets further associate laterally to form amphipathic monolayers.

It localises to the secreted. The protein localises to the cell wall. Aerial growth, conidiation, and dispersal of filamentous fungi in the environment rely upon a capability of their secreting small amphipathic proteins called hydrophobins (HPBs) with low sequence identity. Class I can self-assemble into an outermost layer of rodlet bundles on aerial cell surfaces, conferring cellular hydrophobicity that supports fungal growth, development and dispersal; whereas Class II form highly ordered films at water-air interfaces through intermolecular interactions but contribute nothing to the rodlet structure. The chain is Class I hydrophobin 3 from Coprinopsis cinerea (strain Okayama-7 / 130 / ATCC MYA-4618 / FGSC 9003) (Inky cap fungus).